We begin with the raw amino-acid sequence, 276 residues long: Undecaprenyl-diphosphatase (276 aa).

Transmembrane regions (helical) follow at residues 84-104 (YRLG…GLFF), 115-135 (LWVV…AEYV), 188-208 (FGFL…LPDA), 222-242 (QLLV…AWLL), and 250-270 (MYWF…LLAT).

This sequence belongs to the UppP family.

Its subcellular location is the cell membrane. It carries out the reaction di-trans,octa-cis-undecaprenyl diphosphate + H2O = di-trans,octa-cis-undecaprenyl phosphate + phosphate + H(+). Catalyzes the dephosphorylation of undecaprenyl diphosphate (UPP). Confers resistance to bacitracin. This chain is Undecaprenyl-diphosphatase, found in Mycobacterium bovis (strain ATCC BAA-935 / AF2122/97).